Reading from the N-terminus, the 733-residue chain is SWR1-complex protein 4 (733 aa).

2 disordered regions span residues 1-34 and 98-128; these read MTSHDVRDVLNLPSDHAGPRPSKKARTATPRPNL and PDGTVQDGSAEGQDSAATADNSADKPEDSSF. The 72-residue stretch at 146-217 folds into the SANT domain; that stretch reads NTNLKHPDWT…DLKARYYEVA (72 aa). Residues 247–299 are a coiled coil; it reads KQEQNRKRFAENTLKRSSDEAREEEALLLEIKRIMARTERFNEERRELYNRLD. A compositionally biased stretch (low complexity) spans 371-384; that stretch reads AASRRESLAASSTA. Disordered regions lie at residues 371-488 and 564-733; these read AASR…GSGP and KKAE…KQKK. 4 stretches are compositionally biased toward basic and acidic residues: residues 387–423, 463–484, 564–589, and 610–653; these read NDHHEPPVREPPVRHERQESRSHHRNESRSERADRHG, PERRKLSEHEEQVYGVSHHDRL, KKAERERAAREAAEARGETVEKKGGE, and DDAK…KGEE. The segment covering 699–710 has biased composition (low complexity); that stretch reads GSSSGAGASSGA.

The protein belongs to the SWC4 family. In terms of assembly, component of the SWR1 chromatin-remodeling complex and of the NuA4 histone acetyltransferase complex.

The protein localises to the nucleus. Functionally, component of the SWR1 complex which mediates the ATP-dependent exchange of histone H2A for the H2A variant H2A.Z leading to transcriptional regulation of selected genes by chromatin remodeling. Component of the NuA4 histone acetyltransferase complex which is involved in transcriptional activation of selected genes principally by acetylation of nucleosomal histone H4 and H2A. The NuA4 complex is also involved in DNA repair. In Neurospora crassa (strain ATCC 24698 / 74-OR23-1A / CBS 708.71 / DSM 1257 / FGSC 987), this protein is SWR1-complex protein 4 (crc-1).